Here is a 215-residue protein sequence, read N- to C-terminus: Leucyl/phenylalanyl-tRNA--protein transferase (215 aa).

It belongs to the L/F-transferase family.

It localises to the cytoplasm. The enzyme catalyses N-terminal L-lysyl-[protein] + L-leucyl-tRNA(Leu) = N-terminal L-leucyl-L-lysyl-[protein] + tRNA(Leu) + H(+). The catalysed reaction is N-terminal L-arginyl-[protein] + L-leucyl-tRNA(Leu) = N-terminal L-leucyl-L-arginyl-[protein] + tRNA(Leu) + H(+). It catalyses the reaction L-phenylalanyl-tRNA(Phe) + an N-terminal L-alpha-aminoacyl-[protein] = an N-terminal L-phenylalanyl-L-alpha-aminoacyl-[protein] + tRNA(Phe). Its function is as follows. Functions in the N-end rule pathway of protein degradation where it conjugates Leu, Phe and, less efficiently, Met from aminoacyl-tRNAs to the N-termini of proteins containing an N-terminal arginine or lysine. This chain is Leucyl/phenylalanyl-tRNA--protein transferase, found in Campylobacter jejuni subsp. jejuni serotype O:6 (strain 81116 / NCTC 11828).